The primary structure comprises 154 residues: Transcriptional repressor NrdR (154 aa).

A zinc finger spans residues 3-34 (CPFCAHPDTRVADSRLMEERNAVRRRRHCPNC). The ATP-cone domain maps to 49-139 (PAVIGPDKKR…LHKRFDNPAD (91 aa)).

It belongs to the NrdR family. Zn(2+) serves as cofactor.

In terms of biological role, negatively regulates transcription of bacterial ribonucleotide reductase nrd genes and operons by binding to NrdR-boxes. This is Transcriptional repressor NrdR from Neisseria meningitidis serogroup B (strain ATCC BAA-335 / MC58).